The sequence spans 221 residues: Cytidylate kinase 1 (221 aa).

7-15 (GPSASGKSS) lines the ATP pocket.

Belongs to the cytidylate kinase family. Type 1 subfamily.

Its subcellular location is the cytoplasm. The enzyme catalyses CMP + ATP = CDP + ADP. The catalysed reaction is dCMP + ATP = dCDP + ADP. In Borreliella afzelii (strain PKo) (Borrelia afzelii), this protein is Cytidylate kinase 1.